Reading from the N-terminus, the 88-residue chain is MFNFCSMTSLSAVSVHIRNSPSQNTESSIIIANRLLDLAVCIIFNMFNISFRFPFTGIDRSIFSASEMEMLKLQKCVMLARPNIGTCL.

This is an uncharacterized protein from Vaccinia virus (strain Copenhagen) (VACV).